The sequence spans 77 residues: Large ribosomal subunit protein bL28 (77 aa).

It belongs to the bacterial ribosomal protein bL28 family.

The protein is Large ribosomal subunit protein bL28 of Delftia acidovorans (strain DSM 14801 / SPH-1).